A 348-amino-acid polypeptide reads, in one-letter code: Protein RecA (348 aa).

Position 65 to 72 (Gly65 to Thr72) interacts with ATP.

The protein belongs to the RecA family.

It localises to the cytoplasm. Its function is as follows. Can catalyze the hydrolysis of ATP in the presence of single-stranded DNA, the ATP-dependent uptake of single-stranded DNA by duplex DNA, and the ATP-dependent hybridization of homologous single-stranded DNAs. It interacts with LexA causing its activation and leading to its autocatalytic cleavage. This chain is Protein RecA, found in Enterococcus faecalis (strain ATCC 700802 / V583).